The sequence spans 247 residues: Uridylate kinase (247 aa).

18–21 (KLSG) contributes to the ATP binding site. Gly60 contacts UMP. Residues Gly61 and Arg65 each coordinate ATP. UMP is bound by residues Asp80 and 141–148 (TGNPFFTT). ATP is bound by residues Thr168, Tyr174, and Asp177.

It belongs to the UMP kinase family. As to quaternary structure, homohexamer.

It localises to the cytoplasm. The enzyme catalyses UMP + ATP = UDP + ADP. It participates in pyrimidine metabolism; CTP biosynthesis via de novo pathway; UDP from UMP (UMPK route): step 1/1. With respect to regulation, inhibited by UTP. Catalyzes the reversible phosphorylation of UMP to UDP. The sequence is that of Uridylate kinase from Pseudomonas fluorescens (strain ATCC BAA-477 / NRRL B-23932 / Pf-5).